Consider the following 62-residue polypeptide: Beta-defensin 133 (62 aa).

The N-terminal stretch at Met1 to Gly21 is a signal peptide. Disulfide bonds link Cys32-Cys60 and Cys39-Cys53.

This sequence belongs to the beta-defensin family.

The protein localises to the secreted. Has antibacterial activity. In Pan troglodytes (Chimpanzee), this protein is Beta-defensin 133 (DEFB133).